Consider the following 591-residue polypeptide: Calnexin (591 aa).

Residues 1–20 (MEGKWLLCLLLVLGTAAIQA) form the signal peptide. Residues 21-482 (HDGHDDDMID…QMLEAAEERP (462 aa)) lie on the Lumenal side of the membrane. Positions 75 and 118 each coordinate Ca(2+). N6-acetyllysine is present on lysine 138. Cysteine 161 and cysteine 195 are disulfide-bonded. An alpha-D-glucoside contacts are provided by tyrosine 165, lysine 167, tyrosine 186, and aspartate 193. The segment at 261–347 (GNLLNDMTPP…EKPEDWDEDM (87 aa)) is disordered. Residues 275–320 (REIEDPEDRKPEDWDERPKIADPDAVKPDDWDEDAPSKIPDEEATK) show a composition bias toward basic and acidic residues. The interval 277–410 (IEDPEDRKPE…RKIPNPDFFE (134 aa)) is p domain (Extended arm). 5 consecutive repeat copies span residues 279–291 (DPEDRKPEDWDER), 296–308 (DPDAVKPDDWDED), 315–327 (DEEATKPEGWLDD), 334–346 (DPDAEKPEDWDED), and 349–359 (GEWEAPQIANP). 2 4 X approximate repeats regions span residues 279 to 346 (DPED…WDED) and 349 to 406 (GEWE…IPNP). A compositionally biased stretch (acidic residues) spans 324 to 347 (WLDDEPEYIPDPDAEKPEDWDEDM). The tract at residues 327-360 (DEPEYIPDPDAEKPEDWDEDMDGEWEAPQIANPK) is interaction with PPIB. A disulfide bridge connects residues cysteine 361 and cysteine 367. 3 repeat units span residues 368-378 (GVWQRPMIDNP), 382-392 (GKWKPPMIDNP), and 396-406 (GIWKPRKIPNP). An an alpha-D-glucoside-binding site is contributed by glutamate 426. Aspartate 437 provides a ligand contact to Ca(2+). Residues 483-503 (WLWVVYILTVALPVFLVILFC) traverse the membrane as a helical segment. S-palmitoyl cysteine attachment occurs at residues cysteine 503 and cysteine 504. Over 504–591 (CSGKKQSNAM…SPRNRKPRRE (88 aa)) the chain is Cytoplasmic. The tract at residues 504 to 591 (CSGKKQSNAM…SPRNRKPRRE (88 aa)) is sufficient to mediate interaction with SGIP1. Residues 514-538 (EYKKTDAPQPDVKDEEGKEEEKNKG) show a composition bias toward basic and acidic residues. The segment at 514 to 591 (EYKKTDAPQP…SPRNRKPRRE (78 aa)) is disordered. Serine 553 is modified (phosphoserine). The segment covering 555 to 568 (AEEDGGTGSQDEED) has biased composition (acidic residues). At threonine 561 the chain carries Phosphothreonine. A Phosphoserine; by MAPK3 modification is found at serine 563. Serine 582 carries the post-translational modification Phosphoserine.

Belongs to the calreticulin family. As to quaternary structure, interacts with MAPK3/ERK1. Interacts with KCNH2. Associates with ribosomes. Interacts with SGIP1; involved in negative regulation of endocytosis. The palmitoylated form interacts with the ribosome-translocon complex component SSR1, promoting efficient folding of glycoproteins. Interacts with SERPINA2P/SERPINA2 and with the S and Z variants of SERPINA1. Interacts with PPIB. Interacts with ZNRF4. Interacts with SMIM22. Interacts with TMX2. Interacts with TMEM35A/NACHO and CHRNA7. Interacts with reticulophagy regulators RETREG2 and RETREG3. Interacts with DNM1L; may form part of a larger protein complex at the ER-mitochondrial interface during mitochondrial fission. Interacts with ADAM7. Post-translationally, phosphorylated at Ser-563 by MAPK3/ERK1. Phosphorylation by MAPK3/ERK1 increases its association with ribosomes. In terms of processing, palmitoylation by DHHC6 leads to the preferential localization to the perinuclear rough ER. It mediates the association of calnexin with the ribosome-translocon complex (RTC) which is required for efficient folding of glycosylated proteins. Ubiquitinated, leading to proteasomal degradation. Probably ubiquitinated by ZNRF4.

The protein resides in the endoplasmic reticulum membrane. It localises to the mitochondrion membrane. Its subcellular location is the melanosome membrane. Calcium-binding protein that interacts with newly synthesized monoglucosylated glycoproteins in the endoplasmic reticulum. It may act in assisting protein assembly and/or in the retention within the ER of unassembled protein subunits. It seems to play a major role in the quality control apparatus of the ER by the retention of incorrectly folded proteins. Associated with partial T-cell antigen receptor complexes that escape the ER of immature thymocytes, it may function as a signaling complex regulating thymocyte maturation. Additionally it may play a role in receptor-mediated endocytosis at the synapse. This is Calnexin (Canx) from Rattus norvegicus (Rat).